Reading from the N-terminus, the 230-residue chain is U2 small nuclear ribonucleoprotein A' (230 aa).

3 LRR repeats span residues 19 to 40 (KDRELDLRDNDISSLGNFPFFP), 41 to 62 (RLRMLLLARNRVRQIQPSLANS), and 65 to 86 (GLTTLVLTANNIAELADLDPLR). One can recognise an LRRCT domain in the interval 99–137 (NPVTRKEYYRLWIIWRIPSVRFLDYQKVKDAERAKAAEL). Positions 211–230 (GRIPGGALDGAGNDGDQMQL) are disordered. Over residues 213–223 (IPGGALDGAGN) the composition is skewed to gly residues.

Belongs to the U2 small nuclear ribonucleoprotein A family. In terms of assembly, associated with the spliceosome.

It is found in the nucleus. Its function is as follows. Involved in pre-mRNA splicing. This is U2 small nuclear ribonucleoprotein A' (lea1) from Emericella nidulans (strain FGSC A4 / ATCC 38163 / CBS 112.46 / NRRL 194 / M139) (Aspergillus nidulans).